The sequence spans 433 residues: Serine--tRNA ligase (433 aa).

Residue 235–237 participates in L-serine binding; the sequence is TSE. 266 to 268 lines the ATP pocket; it reads RSE. An L-serine-binding site is contributed by E289. 353-356 contacts ATP; sequence EISS. Residue S388 participates in L-serine binding.

It belongs to the class-II aminoacyl-tRNA synthetase family. Type-1 seryl-tRNA synthetase subfamily. In terms of assembly, homodimer. The tRNA molecule binds across the dimer.

It localises to the cytoplasm. It catalyses the reaction tRNA(Ser) + L-serine + ATP = L-seryl-tRNA(Ser) + AMP + diphosphate + H(+). It carries out the reaction tRNA(Sec) + L-serine + ATP = L-seryl-tRNA(Sec) + AMP + diphosphate + H(+). The protein operates within aminoacyl-tRNA biosynthesis; selenocysteinyl-tRNA(Sec) biosynthesis; L-seryl-tRNA(Sec) from L-serine and tRNA(Sec): step 1/1. In terms of biological role, catalyzes the attachment of serine to tRNA(Ser). Is also able to aminoacylate tRNA(Sec) with serine, to form the misacylated tRNA L-seryl-tRNA(Sec), which will be further converted into selenocysteinyl-tRNA(Sec). This chain is Serine--tRNA ligase, found in Burkholderia orbicola (strain MC0-3).